We begin with the raw amino-acid sequence, 415 residues long: Phosphopentomutase (415 aa).

Residues Asp-10, Asp-313, His-318, Asp-354, His-355, and His-366 each contribute to the Mn(2+) site.

This sequence belongs to the phosphopentomutase family. Mn(2+) serves as cofactor.

The protein localises to the cytoplasm. It catalyses the reaction 2-deoxy-alpha-D-ribose 1-phosphate = 2-deoxy-D-ribose 5-phosphate. The enzyme catalyses alpha-D-ribose 1-phosphate = D-ribose 5-phosphate. It participates in carbohydrate degradation; 2-deoxy-D-ribose 1-phosphate degradation; D-glyceraldehyde 3-phosphate and acetaldehyde from 2-deoxy-alpha-D-ribose 1-phosphate: step 1/2. In terms of biological role, isomerase that catalyzes the conversion of deoxy-ribose 1-phosphate (dRib-1-P) and ribose 1-phosphate (Rib-1-P) to deoxy-ribose 5-phosphate (dRib-5-P) and ribose 5-phosphate (Rib-5-P), respectively. This is Phosphopentomutase from Psychromonas ingrahamii (strain DSM 17664 / CCUG 51855 / 37).